A 368-amino-acid chain; its full sequence is Quinolinate synthase (368 aa).

2 residues coordinate iminosuccinate: H46 and S63. [4Fe-4S] cluster is bound at residue C110. Iminosuccinate is bound by residues 141-143 (YVN) and S162. A [4Fe-4S] cluster-binding site is contributed by C230. Iminosuccinate-binding positions include 256–258 (HPE) and T273. Residue C320 coordinates [4Fe-4S] cluster.

This sequence belongs to the quinolinate synthase family. Type 3 subfamily. The cofactor is [4Fe-4S] cluster.

Its subcellular location is the cytoplasm. It catalyses the reaction iminosuccinate + dihydroxyacetone phosphate = quinolinate + phosphate + 2 H2O + H(+). It participates in cofactor biosynthesis; NAD(+) biosynthesis; quinolinate from iminoaspartate: step 1/1. Its function is as follows. Catalyzes the condensation of iminoaspartate with dihydroxyacetone phosphate to form quinolinate. The chain is Quinolinate synthase from Bacillus cereus (strain B4264).